The primary structure comprises 172 residues: Ribosome maturation factor RimM (172 aa).

Residues 97 to 170 (DDEYYYDEII…LITIDVLEGL (74 aa)) enclose the PRC barrel domain.

This sequence belongs to the RimM family. In terms of assembly, binds ribosomal protein uS19.

The protein resides in the cytoplasm. An accessory protein needed during the final step in the assembly of 30S ribosomal subunit, possibly for assembly of the head region. Essential for efficient processing of 16S rRNA. May be needed both before and after RbfA during the maturation of 16S rRNA. It has affinity for free ribosomal 30S subunits but not for 70S ribosomes. The protein is Ribosome maturation factor RimM of Leuconostoc citreum (strain KM20).